A 2527-amino-acid polypeptide reads, in one-letter code: Neurogenic locus notch homolog protein 1 (2527 aa).

The first 36 residues, 1-36 (MGRSDSRAGALLEGGCEQNIDPRRAAHCHHPRLATS), serve as a signal peptide directing secretion. At 37-1741 (SLRCSQPSGT…VEPPLPSQLH (1705 aa)) the chain is on the extracellular side. 33 disulfides stabilise this stretch: Cys40/Cys53, Cys47/Cys62, Cys64/Cys73, Cys79/Cys90, Cys84/Cys103, Cys105/Cys114, Cys122/Cys133, Cys127/Cys143, Cys145/Cys154, Cys160/Cys171, Cys165/Cys180, Cys182/Cys191, Cys198/Cys211, Cys205/Cys220, Cys222/Cys231, Cys238/Cys249, Cys243/Cys259, Cys261/Cys270, Cys277/Cys288, Cys282/Cys297, Cys299/Cys308, Cys315/Cys328, Cys322/Cys337, Cys339/Cys348, Cys355/Cys366, Cys360/Cys375, Cys377/Cys386, Cys392/Cys403, Cys397/Cys414, Cys416/Cys425, Cys432/Cys445, Cys439/Cys454, and Cys456/Cys465. Asn57 carries an N-linked (GlcNAc...) asparagine glycan. 3 consecutive EGF-like domains span residues 75–115 (DPNP…PLCL), 118–155 (LDNACLANPCRNGGTCDLLTLTEYKCRCPPGWSGKSCQ), and 156–192 (QADPCASNPCANGGQCLPFESSYICGCPPGFHGPTCR). A glycan (O-linked (Glc...) serine) is linked at Ser81. O-linked (Fuc...) threonine glycosylation occurs at Thr89. Residue Thr132 is glycosylated (O-linked (Fuc...) threonine). An O-linked (Glc...) serine glycan is attached at Ser162. The region spanning 194 to 232 (DVNECSQNPGLCRHGGTCHNEIGSYRCVCRATHTGPHCE) is the EGF-like 4; calcium-binding domain. Thr210 carries O-linked (Fuc...) threonine glycosylation. Residues 234–271 (PYVPCSPSPCQNGGTCRPTGDTTHECACLPGFAGQNCE) enclose the EGF-like 5 domain. Thr248 carries an O-linked (Fuc...) threonine; alternate glycan. Thr248 is a glycosylation site (O-linked (GalNAc...) threonine; alternate). The EGF-like 6; calcium-binding domain occupies 273–309 (NVDDCPGNNCKNGGACVDGVNTYNCRCPPEWTGQYCT). In terms of domain architecture, EGF-like 7; calcium-binding spans 311-349 (DVDECQLMPNACQNGGTCHNTHGGYNCVCVNGWTGEDCS). Residue Thr327 is glycosylated (O-linked (Fuc...) threonine). The 37-residue stretch at 351–387 (NIDDCASAACFQGATCHDRVASFYCECPHGRTGLLCH) folds into the EGF-like 8; calcium-binding domain. O-linked (Glc...) serine glycosylation occurs at Ser357. O-linked (Fuc...) threonine glycosylation occurs at Thr365. Positions 388-426 (LNDACISNPCNEGSNCDTNPVNGKAICTCPSGYTGPACS) constitute an EGF-like 9 domain. The O-linked (Glc...) serine glycan is linked to Ser394. The EGF-like 10; calcium-binding domain maps to 428–466 (DVDECALGANPCEHAGKCLNTLGSFECQCLQGYTGPRCE). Residues 436–437 (AN) form an interaction with DLL4 region. Ca(2+) contacts are provided by Thr448 and Ser451. A glycan (O-linked (Glc...) serine) is linked at Ser451. The tract at residues 464–468 (RCEID) is interaction with DLL4. Ca(2+)-binding residues include Asp468, Val469, and Glu471. An EGF-like 11; calcium-binding domain is found at 468 to 504 (DVNECISNPCQNDATCLDQIGEFQCICMPGYEGVYCE). 3 disulfides stabilise this stretch: Cys472-Cys483, Cys477-Cys492, and Cys494-Cys503. O-linked (Glc...) serine glycosylation occurs at Ser474. O-linked (Fuc...) threonine glycosylation occurs at Thr482. Positions 485 and 486 each coordinate Ca(2+). Ca(2+) is bound by residues Asn506, Thr507, and Glu509. The region spanning 506-542 (NTDECASSPCLHNGHCMDKINEFLCQCPKGFSGHLCQ) is the EGF-like 12; calcium-binding domain. Disulfide bonds link Cys510-Cys521, Cys515-Cys530, Cys532-Cys541, Cys548-Cys559, Cys553-Cys568, Cys570-Cys579, Cys586-Cys596, Cys591-Cys605, Cys607-Cys616, Cys623-Cys634, Cys628-Cys643, Cys645-Cys654, Cys661-Cys671, Cys666-Cys680, Cys682-Cys691, Cys698-Cys709, Cys703-Cys718, Cys720-Cys729, Cys736-Cys746, Cys741-Cys755, Cys757-Cys766, Cys773-Cys784, Cys778-Cys793, Cys795-Cys804, Cys811-Cys822, Cys816-Cys831, Cys833-Cys842, and Cys849-Cys860. An O-linked (Glc...) serine glycan is attached at Ser512. Positions 523 and 524 each coordinate Ca(2+). Residues 544–580 (DVDECASTPCKNGAKCLDGPNTYTCVCTEGYTGTHCE) form the EGF-like 13; calcium-binding domain. Ser550 is a glycosylation site (O-linked (Glc...) serine). An EGF-like 14; calcium-binding domain is found at 582 to 617 (DIDECDPDPCHYGFCKDGVATFTCLCQPGYTGHHCE). The 37-residue stretch at 619–655 (NINECHSQPCRHGGTCQDRDNSYLCLCLKGTTGPNCE) folds into the EGF-like 15; calcium-binding domain. Residue Ser625 is glycosylated (O-linked (Glc...) serine). Thr633 carries an O-linked (Fuc...) threonine glycan. The EGF-like 16; calcium-binding domain maps to 657–692 (NLDDCASNPCDSGTCLDKIDGYECACEPGYTGSMCN). An O-linked (Glc...) serine glycan is attached at Ser663. The 37-residue stretch at 694 to 730 (NIDECAGSPCHNGGTCEDGIAGFTCRCPEGYHDPTCL) folds into the EGF-like 17; calcium-binding domain. Thr708 carries an O-linked (Fuc...) threonine glycan. The EGF-like 18; calcium-binding domain maps to 732–767 (EVNECNSNPCIHGACRDGLNGYKCDCAPGWSGTNCD). O-linked (Glc...) serine glycosylation occurs at Ser738. Positions 769-805 (NNNECESNPCVNGGTCKDMTSGYVCTCREGFSGPNCQ) constitute an EGF-like 19 domain. An O-linked (Glc...) serine glycan is attached at Ser775. Thr783 carries an O-linked (Fuc...) threonine glycan. Residue Ser800 is glycosylated (O-linked (GlcNAc) serine). One can recognise an EGF-like 20; calcium-binding domain in the interval 807-843 (NINECASNPCLNQGTCIDDVAGYKCNCPLPYTGATCE). An O-linked (Glc...) serine glycan is attached at Ser813. Residue Thr821 is glycosylated (O-linked (Fuc...) threonine). Residues 845-883 (VLAPCATSPCKNSGVCKESEDYESFSCVCPTGWQGQTCE) enclose the EGF-like 21 domain. The region spanning 885–921 (DINECVKSPCRHGASCQNTNGSYRCLCQAGYTGRNCE) is the EGF-like 22; calcium-binding domain. Residue Asn904 is glycosylated (N-linked (GlcNAc...) asparagine). Thr916 carries an O-linked (GlcNAc) threonine glycan. Residues 923 to 959 (DIDDCRPNPCHNGGSCTDGINMAFCDCLPGFQGAFCE) form the EGF-like 23 domain. O-linked (Fuc) serine glycosylation occurs at Ser937. The region spanning 961-997 (DINECASNPCRNGANCTDCVDSYTCTCPAGFNGIHCE) is the EGF-like 24; calcium-binding domain. A glycan (O-linked (Glc...) serine) is linked at Ser967. N-linked (GlcNAc...) asparagine glycosylation occurs at Asn975. 5 EGF-like domains span residues 999–1035 (NTPDCTESSCFNGGTCVDGINSFTCLCPPGFTGSYCQ), 1037–1073 (DVNECDSRPCLHGGTCQDSYGTYKCTCPQGYTGLNCQ), 1075–1111 (LVHWCDSAPCKNGGKCWQTNTQYHCECRSGWTGFNCD), 1113–1159 (LSVS…SYCE), and 1161–1197 (EVDECSPNPCQNGATCTDYLGGFSCKCVAGYHGSNCS). An O-linked (Fuc...) threonine glycan is attached at Thr1013. O-linked (Glc...) serine glycosylation occurs at Ser1043. O-linked (Fuc...) threonine glycosylation occurs at Thr1051. Residue Ser1081 is glycosylated (O-linked (Glc...) serine). A disulfide bridge connects residues Cys1117 and Cys1138. A glycan (O-linked (Fuc...) threonine) is linked at Thr1175. Residue Asn1195 is glycosylated (N-linked (GlcNAc...) asparagine). The 37-residue stretch at 1199 to 1235 (EINECLSQPCQNGGTCIDLTNTYKCSCPRGTQGVHCE) folds into the EGF-like 30; calcium-binding domain. Ser1205 carries an O-linked (Glc...) serine glycan. O-linked (Fuc...) threonine glycosylation occurs at Thr1213. One can recognise an EGF-like 31; calcium-binding domain in the interval 1237-1281 (NVDDCHPHLDPASRSPKCFNNGTCVDQVGGYSCTCPPGFVGERCE). An N-linked (GlcNAc...) asparagine glycan is attached at Asn1257. EGF-like domains lie at 1283-1321 (DINECLSNPCDPRGTQDCVQRVNDFHCECRAGHTGRRCE), 1323-1362 (VINGCRGKPCKNGGVCAVASNTARGFICRCPAGFEGATCE), 1364-1400 (DARTCGSLRCLNGGTCISGPRSPTCLCLGSFTGPECQ), and 1403-1442 (ASSPCVGSNPCYNQGTCEPTSESPFYRCLCPAKFNGLLCH). Residue Ser1289 is glycosylated (O-linked (Glc...) serine). O-linked (Fuc...) threonine glycosylation is present at Thr1378. Thr1395 carries an O-linked (GlcNAc...) threonine glycan. The O-linked (Fuc...) threonine; alternate glycan is linked to Thr1418. Thr1418 carries O-linked (GalNAc...) threonine; alternate glycosylation. LNR repeat units lie at residues 1465–1505 (CELP…PWKN), 1506–1547 (CTQS…CNPL), and 1548–1587 (YDQYCKDHFSDGHCDQGCNSAECDWDGLDCADHVPERLAA). Residues Asp1473, Asn1476, Asp1491, and Asp1494 each coordinate Ca(2+). Asn1505 carries an N-linked (GlcNAc...) asparagine glycan. Asn1603 carries an N-linked (GlcNAc...) asparagine glycan. Thr1731 carries an O-linked (GalNAc...) threonine glycan. An interaction with PSEN1 region spans residues 1734 to 1766 (PPLPSQLHLMYLAAAAFVLLFFVGCGVLLSRKR). Residues 1742–1762 (LMYLAAAAFVLLFFVGCGVLL) form a helical membrane-spanning segment. Residues 1763 to 2527 (SRKRRRQHGQ…QITHIPEAFK (765 aa)) are Cytoplasmic-facing. Lys1765 participates in a covalent cross-link: Glycyl lysine isopeptide (Lys-Gly) (interchain with G-Cter in ubiquitin). Residues 1786 to 1814 (KKKRREPLGEDSVGLKPLKNASDGALMDD) form a disordered region. Phosphothreonine is present on Thr1867. 5 ANK repeats span residues 1933–1962 (TGETALHLAARYSRSDAAKRLLEASADANI), 1966–1996 (MGRTPLHAAVSADAQGVFQILLRNRATDLDA), 2000–2029 (DGTTPLILAARLAVEGMLEDLINSHADVNA), 2033–2062 (LGKSALHWAAAVNNVDAAVVLLKNGANKDM), and 2066–2095 (KEETPLFLAAREGSYETAKVLLDHFANRDI). Residues 1953 to 1961 (LLEASADAN) are HIF1AN-binding. At Asn1961 the chain carries (3S)-3-hydroxyasparagine; by HIF1AN; partial. Positions 2020–2028 (LINSHADVN) are HIF1AN-binding. (3S)-3-hydroxyasparagine; by HIF1AN is present on Asn2028. Disordered regions lie at residues 2157–2201 (SATQ…DSSS), 2378–2424 (QPQN…SLPV), and 2436–2527 (PTSL…EAFK). Low complexity predominate over residues 2378–2391 (QPQNLQPPSQPHLS). Over residues 2436–2474 (PTSLPSSMVPPMTTTQFLTPPSQHSYSSSPVDNTPSHQL) the composition is skewed to polar residues. Residues 2484 to 2499 (PSPESPDQWSSSSPHS) are compositionally biased toward low complexity. Positions 2500–2520 (NISDWSEGISSPPTSMPSQIT) are enriched in polar residues.

The protein belongs to the NOTCH family. In terms of assembly, heterodimer of a C-terminal fragment N(TM) and an N-terminal fragment N(EC) which are probably linked by disulfide bonds. Interacts with DNER, DTX1, DTX2 and RBPJ/RBPSUH. Also interacts with MAML1, MAML2 and MAML3 which act as transcriptional coactivators for NOTCH1. Notch 1 intracellular domain interacts with SNW1; the interaction involves multimerized NOTCH1 NICD and is implicated in a formation of an intermediate preactivation complex which associates with DNA-bound CBF-1/RBPJ. The activated membrane-bound form interacts with AAK1 which promotes NOTCH1 stabilization. Forms a trimeric complex with FBXW7 and SGK1. Interacts with HIF1AN. HIF1AN negatively regulates the function of notch intracellular domain (NICD), accelerating myogenic differentiation. Interacts (via NICD) with SNAI1 (via zinc fingers); the interaction induces SNAI1 degradation via MDM2-mediated ubiquitination and inhibits SNAI1-induced cell invasion. Interacts (via NICD) with MDM2A. Interacts (via NICD) with BCL6; the interaction decreases MAML1 recruitment by NOTCH1 NICD on target genes DNA and inhibits NOTCH1 transactivation activity. Interacts with THBS4. Interacts (via the EGF-like repeat region) with CCN3 (via CTCK domain). Interacts (via EGF-like domains) with DLL4 (via N-terminal DSL and MNNL domains). Interacts with ZMIZ1. Interacts (via NICD domain) with MEGF10 (via the cytoplasmic domain). Interacts with DLL1 and JAG1. Interacts (via NICD domain) with PRAG1. Forms a complex with PRAG1, N1ICD and MAML1, in a MAML1-dependent manner. Interacts (via transmembrane region) with PSEN1; the interaction is direct. Interacts with ZFP64. In terms of processing, synthesized in the endoplasmic reticulum as an inactive form which is proteolytically cleaved by a furin-like convertase in the trans-Golgi network before it reaches the plasma membrane to yield an active, ligand-accessible form. Cleavage results in a C-terminal fragment N(TM) and a N-terminal fragment N(EC). Following ligand binding, it is cleaved by ADAM17 to yield a membrane-associated intermediate fragment called notch extracellular truncation (NEXT). Following endocytosis, this fragment is then cleaved by one of the catalytic subunits of gamma-secretase (PSEN1 or PSEN2) to release a Notch-derived peptide containing the intracellular domain (NICD) from the membrane. Phosphorylated. Post-translationally, O-linked glycosylation by GALNT11 is involved in determination of left/right symmetry: glycosylation promotes activation of NOTCH1, possibly by promoting cleavage by ADAM17, modulating the balance between motile and immotile (sensory) cilia at the left-right organiser (LRO). O-glycosylated on the EGF-like domains. O-glucosylated at Ser-451 by KDELC1 and KDELC2. Contains both O-linked fucose and O-linked glucose in the EGF-like domains 11, 12 and 13, which are interacting with the residues on DLL4. MFNG-, RFNG- and LFNG-mediated modification of O-fucose residues at specific EGF-like domains results in inhibition of its activation by JAG1 and enhancement of its activation by DLL1 via an increased binding to DLL1. In terms of processing, ubiquitinated. Undergoes 'Lys-29'-linked polyubiquitination by ITCH; promotes the lysosomal degradation of non-activated internalized NOTCH1. Deubiquitination by USP12 is required for transport of internalized non-activated receptor from late endosomes to lysosomes for degradation. Monoubiquitination at Lys-1765 is required for activation by gamma-secretase cleavage, it promotes interaction with AAK1, which stabilizes it. Deubiquitination by EIF3F is necessary for nuclear import of activated Notch. Hydroxylated at Asn-1961 by HIF1AN. Hydroxylated at Asn-2028 by HIF1AN. Hydroxylation reduces affinity for HI1AN and may thus indirectly modulate negative regulation of NICD.

It is found in the cell membrane. It localises to the late endosome membrane. Its subcellular location is the nucleus. In terms of biological role, functions as a receptor for membrane-bound ligands Jagged-1 (JAG1), Jagged-2 (JAG2) and Delta-1 (DLL1) to regulate cell-fate determination. Upon ligand activation through the released notch intracellular domain (NICD) it forms a transcriptional activator complex with RBPJ/RBPSUH and activates genes of the enhancer of split locus. Affects the implementation of differentiation, proliferation and apoptotic programs. Involved in angiogenesis; negatively regulates endothelial cell proliferation and migration and angiogenic sprouting. Involved in the maturation of both CD4(+) and CD8(+) cells in the thymus. Important for follicular differentiation and possibly cell fate selection within the follicle. During cerebellar development, functions as a receptor for neuronal DNER and is involved in the differentiation of Bergmann glia. Represses neuronal and myogenic differentiation. May play an essential role in postimplantation development, probably in some aspect of cell specification and/or differentiation. May be involved in mesoderm development, somite formation and neurogenesis. May enhance HIF1A function by sequestering HIF1AN away from HIF1A. Required for the THBS4 function in regulating protective astrogenesis from the subventricular zone (SVZ) niche after injury. Involved in determination of left/right symmetry by modulating the balance between motile and immotile (sensory) cilia at the left-right organiser (LRO). The polypeptide is Neurogenic locus notch homolog protein 1 (NOTCH1) (Cricetulus griseus (Chinese hamster)).